Consider the following 401-residue polypeptide: Elongation factor Tu (401 aa).

Residues lysine 10–glutamine 209 enclose the tr-type G domain. A G1 region spans residues glycine 19–threonine 26. Glycine 19–threonine 26 is a binding site for GTP. Position 26 (threonine 26) interacts with Mg(2+). Residues glycine 60 to alanine 64 are G2. The G3 stretch occupies residues aspartate 81–glycine 84. GTP is bound by residues aspartate 81–histidine 85 and asparagine 136–aspartate 139. The segment at asparagine 136–aspartate 139 is G4. The G5 stretch occupies residues serine 174 to arginine 176.

It belongs to the TRAFAC class translation factor GTPase superfamily. Classic translation factor GTPase family. EF-Tu/EF-1A subfamily. As to quaternary structure, monomer.

The protein localises to the cytoplasm. It carries out the reaction GTP + H2O = GDP + phosphate + H(+). In terms of biological role, GTP hydrolase that promotes the GTP-dependent binding of aminoacyl-tRNA to the A-site of ribosomes during protein biosynthesis. The polypeptide is Elongation factor Tu (Chloroflexus aurantiacus (strain ATCC 29366 / DSM 635 / J-10-fl)).